The sequence spans 320 residues: MATYCDEPVDSYFYSSYNPYMGRYPRHRDAGWKYKSYLSHYGDTSEAFSNQQRAQLKSILSQINPKLTPRLRKANTKDVAVQVNPKRDASVQCSIGPRTLLVVKRELRRRRKLNPGPPGTPQKTEGEVRYPRTLAVYSPIAFRSVTSFLVETGKDRPAAEAQAEELPGEQPEQKGGENQAGEETNANLPEQRKPQSEDAQTAADAEGSKGKARVRFQFLEQKYGYYHCRECNLRWESAYVWCVQGTNKVYFKQFCRKCQKDFNPYRVEDITCHVCNKARCACAETQRHVDPKRPHRQDLCGRCKGKRLSCDSTFSFKYIV.

Disordered stretches follow at residues 106 to 130 (ELRRRRKLNPGPPGTPQKTEGEVRY) and 155 to 208 (DRPA…AEGS). The 3CxxC-type zinc-finger motif lies at 222–305 (KYGYYHCREC…RQDLCGRCKG (84 aa)).

It belongs to the ZAR1 family.

It is found in the cytoplasm. The protein localises to the cytoplasmic ribonucleoprotein granule. Its function is as follows. mRNA-binding protein required for maternal mRNA storage, translation and degradation during oocyte maturation. Probably promotes formation of some phase-separated membraneless compartment that stores maternal mRNAs in oocytes: acts by undergoing liquid-liquid phase separation upon binding to maternal mRNAs. Binds to the 3'-UTR of maternal mRNAs, inhibiting their translation. The chain is Zygote arrest protein 1 from Takifugu rubripes (Japanese pufferfish).